We begin with the raw amino-acid sequence, 199 residues long: Copper transport protein CTR4 (199 aa).

The next 2 membrane-spanning stretches (helical) occupy residues 62-82 and 152-172; these read KGMF…IELI and AFFV…FIFL.

The protein belongs to the copper transporter (Ctr) (TC 1.A.56) family. SLC31A subfamily.

The protein localises to the membrane. Its function is as follows. Required for high affinity copper (probably reduced Cu I) transport into the cell. Plays a role in fungal pathogenesis during host infection. This chain is Copper transport protein CTR4, found in Cryptococcus neoformans var. grubii serotype A (strain H99 / ATCC 208821 / CBS 10515 / FGSC 9487) (Filobasidiella neoformans var. grubii).